The chain runs to 321 residues: Ornithine carbamoyltransferase (321 aa).

Residues 53 to 56 (STRT), Q80, R104, and 131 to 134 (HPCQ) contribute to the carbamoyl phosphate site. L-ornithine-binding positions include N166, D230, and 234–235 (SM). Carbamoyl phosphate is bound by residues 270–271 (CL) and R298.

Belongs to the aspartate/ornithine carbamoyltransferase superfamily. OTCase family.

It is found in the cytoplasm. The catalysed reaction is carbamoyl phosphate + L-ornithine = L-citrulline + phosphate + H(+). It participates in amino-acid degradation; L-arginine degradation via ADI pathway; carbamoyl phosphate from L-arginine: step 2/2. Reversibly catalyzes the transfer of the carbamoyl group from carbamoyl phosphate (CP) to the N(epsilon) atom of ornithine (ORN) to produce L-citrulline. This is Ornithine carbamoyltransferase from Bifidobacterium longum subsp. infantis (strain ATCC 15697 / DSM 20088 / JCM 1222 / NCTC 11817 / S12).